We begin with the raw amino-acid sequence, 346 residues long: Holliday junction branch migration complex subunit RuvB (346 aa).

The tract at residues 2 to 183 (TDDRIIGAGA…FGIVQRLEFY (182 aa)) is large ATPase domain (RuvB-L). Residues Ile-22, Arg-23, Gly-64, Lys-67, Thr-68, Thr-69, 130–132 (EDF), Arg-173, Tyr-183, and Arg-220 contribute to the ATP site. Residue Thr-68 coordinates Mg(2+). Residues 184–254 (SVEELTRIVR…VAQAAMKMLK (71 aa)) are small ATPAse domain (RuvB-S). The segment at 257–346 (PEGFDELDRR…DLFAEVPDVG (90 aa)) is head domain (RuvB-H). Positions 293, 312, and 317 each coordinate DNA.

The protein belongs to the RuvB family. As to quaternary structure, homohexamer. Forms an RuvA(8)-RuvB(12)-Holliday junction (HJ) complex. HJ DNA is sandwiched between 2 RuvA tetramers; dsDNA enters through RuvA and exits via RuvB. An RuvB hexamer assembles on each DNA strand where it exits the tetramer. Each RuvB hexamer is contacted by two RuvA subunits (via domain III) on 2 adjacent RuvB subunits; this complex drives branch migration. In the full resolvosome a probable DNA-RuvA(4)-RuvB(12)-RuvC(2) complex forms which resolves the HJ.

It localises to the cytoplasm. It catalyses the reaction ATP + H2O = ADP + phosphate + H(+). The RuvA-RuvB-RuvC complex processes Holliday junction (HJ) DNA during genetic recombination and DNA repair, while the RuvA-RuvB complex plays an important role in the rescue of blocked DNA replication forks via replication fork reversal (RFR). RuvA specifically binds to HJ cruciform DNA, conferring on it an open structure. The RuvB hexamer acts as an ATP-dependent pump, pulling dsDNA into and through the RuvAB complex. RuvB forms 2 homohexamers on either side of HJ DNA bound by 1 or 2 RuvA tetramers; 4 subunits per hexamer contact DNA at a time. Coordinated motions by a converter formed by DNA-disengaged RuvB subunits stimulates ATP hydrolysis and nucleotide exchange. Immobilization of the converter enables RuvB to convert the ATP-contained energy into a lever motion, pulling 2 nucleotides of DNA out of the RuvA tetramer per ATP hydrolyzed, thus driving DNA branch migration. The RuvB motors rotate together with the DNA substrate, which together with the progressing nucleotide cycle form the mechanistic basis for DNA recombination by continuous HJ branch migration. Branch migration allows RuvC to scan DNA until it finds its consensus sequence, where it cleaves and resolves cruciform DNA. In Stenotrophomonas maltophilia (strain K279a), this protein is Holliday junction branch migration complex subunit RuvB.